The following is a 290-amino-acid chain: 4-hydroxybenzoate octaprenyltransferase (290 aa).

Transmembrane regions (helical) follow at residues 41 to 61 (WPLL…GCAM), 89 to 109 (WEAV…IQPL), 133 to 153 (FFAI…PMAF), 158 to 178 (DTVP…SVAY), 202 to 224 (FGRF…YVWI), and 269 to 289 (WLGG…GTAG).

It belongs to the UbiA prenyltransferase family. The cofactor is Mg(2+).

It is found in the cell inner membrane. It carries out the reaction all-trans-octaprenyl diphosphate + 4-hydroxybenzoate = 4-hydroxy-3-(all-trans-octaprenyl)benzoate + diphosphate. It participates in cofactor biosynthesis; ubiquinone biosynthesis. Its function is as follows. Catalyzes the prenylation of para-hydroxybenzoate (PHB) with an all-trans polyprenyl group. Mediates the second step in the final reaction sequence of ubiquinone-8 (UQ-8) biosynthesis, which is the condensation of the polyisoprenoid side chain with PHB, generating the first membrane-bound Q intermediate 3-octaprenyl-4-hydroxybenzoate. In Burkholderia ambifaria (strain MC40-6), this protein is 4-hydroxybenzoate octaprenyltransferase.